We begin with the raw amino-acid sequence, 492 residues long: Dipeptide permease D (492 aa).

The next 13 membrane-spanning stretches (helical) occupy residues 14–34 (VVAL…LLIL), 49–69 (ALFS…GYLA), 91–111 (LVLG…AIIV), 138–158 (GGFS…PIAC), 167–187 (WAMG…IFLC), 212–232 (NWGW…VLFW), 236–256 (SVYA…RIYL), 269–289 (LIVV…QGGS), 312–332 (MFQS…AWLV), 344–364 (IWGK…ILTL), 379–399 (LMVL…PVAM), 413–433 (VLTG…AGVI), and 458–478 (VFSQ…VIWL).

This sequence belongs to the major facilitator superfamily. Proton-dependent oligopeptide transporter (POT/PTR) (TC 2.A.17) family. DtpD subfamily.

It is found in the cell inner membrane. Functionally, probable proton-dependent permease that transports dipeptides. This Klebsiella pneumoniae subsp. pneumoniae (strain ATCC 700721 / MGH 78578) protein is Dipeptide permease D.